The sequence spans 234 residues: Phosphoribosylaminoimidazole-succinocarboxamide synthase (234 aa).

The protein belongs to the SAICAR synthetase family.

The catalysed reaction is 5-amino-1-(5-phospho-D-ribosyl)imidazole-4-carboxylate + L-aspartate + ATP = (2S)-2-[5-amino-1-(5-phospho-beta-D-ribosyl)imidazole-4-carboxamido]succinate + ADP + phosphate + 2 H(+). It functions in the pathway purine metabolism; IMP biosynthesis via de novo pathway; 5-amino-1-(5-phospho-D-ribosyl)imidazole-4-carboxamide from 5-amino-1-(5-phospho-D-ribosyl)imidazole-4-carboxylate: step 1/2. The polypeptide is Phosphoribosylaminoimidazole-succinocarboxamide synthase (Pyrobaculum aerophilum (strain ATCC 51768 / DSM 7523 / JCM 9630 / CIP 104966 / NBRC 100827 / IM2)).